We begin with the raw amino-acid sequence, 357 residues long: 3-dehydroquinate synthase (357 aa).

NAD(+) contacts are provided by residues Gly104 to Asp108, Thr128 to Thr129, Lys141, and Phe168 to Thr171. Residues Glu183, His243, and His260 each contribute to the Zn(2+) site.

The protein belongs to the sugar phosphate cyclases superfamily. Dehydroquinate synthase family. NAD(+) is required as a cofactor. It depends on Co(2+) as a cofactor. Zn(2+) serves as cofactor.

The protein resides in the cytoplasm. The catalysed reaction is 7-phospho-2-dehydro-3-deoxy-D-arabino-heptonate = 3-dehydroquinate + phosphate. Its pathway is metabolic intermediate biosynthesis; chorismate biosynthesis; chorismate from D-erythrose 4-phosphate and phosphoenolpyruvate: step 2/7. Catalyzes the conversion of 3-deoxy-D-arabino-heptulosonate 7-phosphate (DAHP) to dehydroquinate (DHQ). The protein is 3-dehydroquinate synthase of Streptococcus pyogenes serotype M18 (strain MGAS8232).